We begin with the raw amino-acid sequence, 179 residues long: Large ribosomal subunit protein uL5 (179 aa).

Belongs to the universal ribosomal protein uL5 family. As to quaternary structure, part of the 50S ribosomal subunit; part of the 5S rRNA/L5/L18/L25 subcomplex. Contacts the 5S rRNA and the P site tRNA. Forms a bridge to the 30S subunit in the 70S ribosome.

In terms of biological role, this is one of the proteins that bind and probably mediate the attachment of the 5S RNA into the large ribosomal subunit, where it forms part of the central protuberance. In the 70S ribosome it contacts protein S13 of the 30S subunit (bridge B1b), connecting the 2 subunits; this bridge is implicated in subunit movement. Contacts the P site tRNA; the 5S rRNA and some of its associated proteins might help stabilize positioning of ribosome-bound tRNAs. The protein is Large ribosomal subunit protein uL5 of Desulfovibrio desulfuricans (strain ATCC 27774 / DSM 6949 / MB).